The chain runs to 857 residues: Glucans biosynthesis glucosyltransferase H (857 aa).

6 helical membrane passes run 142–162 (ILLTLMIGQTLVAGWYMKGIL), 196–216 (ILILFGILFCWVSAGFWTALM), 515–535 (VFLTGVMSYLSAPLWFFFLVL), 572–592 (LFSTTIVLLFLPKLLSIILIW), 606–626 (TLSMLMEMLFSMLLAPVRMIF), and 682–702 (FLWWLAPIVGSLVLSIPVSVI).

The protein belongs to the glycosyltransferase 2 family. OpgH subfamily.

The protein localises to the cell inner membrane. The protein operates within glycan metabolism; osmoregulated periplasmic glucan (OPG) biosynthesis. Involved in the biosynthesis of osmoregulated periplasmic glucans (OPGs). This chain is Glucans biosynthesis glucosyltransferase H, found in Pseudomonas putida (strain W619).